Here is a 1250-residue protein sequence, read N- to C-terminus: DNA excision repair protein ERCC-6-like (1250 aa).

At serine 14 the chain carries Phosphoserine. One copy of the TPR 1 repeat lies at 21-54; it reads YLRYVKEAKEATKNGDLEEAFKLFNLAKDIFPNE. In terms of domain architecture, Helicase ATP-binding spans 109 to 277; it reads SLYRDGRKGG…WSLFDFACQG (169 aa). 122–129 provides a ligand contact to ATP; it reads DDMGLGKT. Positions 228 to 231 match the DEAH box motif; that stretch reads DEAH. A Helicase C-terminal domain is found at 464 to 620; it reads FLMDLLKRLR…EKKNPFRYFS (157 aa). A disordered region spans residues 735-768; sequence VFPSSTKKKCPKLNKPQPQPSPLLSTHHTQEEDI. A phosphoserine mark is found at serine 755, serine 774, serine 807, and serine 810. A Phosphothreonine modification is found at threonine 813. Position 820 is a phosphoserine (serine 820). Residues 926-946 form a disordered region; it reads SALQDAQASEAKLEEEPSASS. Serine 969, serine 971, serine 995, serine 1004, and serine 1028 each carry phosphoserine. The tract at residues 1061–1092 is disordered; it reads ASTPKNDISPPGRFFSSQIPSSVNKSMNSRRS. Threonine 1063 carries the phosphothreonine; by PLK1 modification. Serine 1069 is modified (phosphoserine). The span at 1075–1087 shows a compositional bias: polar residues; it reads FSSQIPSSVNKSM. Serine 1098 and serine 1118 each carry phosphoserine. Residues 1110–1199 form a disordered region; it reads MEERLDDSSE…QDKAAEATND (90 aa). Residues 1115 to 1124 are compositionally biased toward basic and acidic residues; the sequence is DDSSEAKGPE. A compositionally biased stretch (acidic residues) spans 1125 to 1135; it reads DYPEEGVEESS. The span at 1149–1173 shows a compositional bias: polar residues; that stretch reads ETLSSENKSSWLMTSKPSALAQETS. Phosphoserine occurs at positions 1181 and 1188. The TPR 2 repeat unit spans residues 1200–1233; sequence YETLVKRGKELKECGKIQEALNCLVKALDIKSAD.

It belongs to the SNF2/RAD54 helicase family. Interacts with PLK1, which phosphorylates it. Both proteins are mutually dependent on each other for correct subcellular localization. Interacts (via N-terminal TPR repeat) with BEND3 (via BEN domains 1 and 3); the interaction is direct. Phosphorylation by PLK1 prevents the association with chromosome arms and restricts its localization to the kinetochore-centromere region.

Its subcellular location is the chromosome. The protein localises to the centromere. It is found in the kinetochore. It carries out the reaction ATP + H2O = ADP + phosphate + H(+). DNA helicase that acts as a tension sensor that associates with catenated DNA which is stretched under tension until it is resolved during anaphase. Functions as ATP-dependent DNA translocase. Can promote Holliday junction branch migration (in vitro). The chain is DNA excision repair protein ERCC-6-like (ERCC6L) from Homo sapiens (Human).